The primary structure comprises 580 residues: Double-stranded RNA-binding protein Staufen homolog 1 (580 aa).

Position 2 is an N-acetylserine (S2). Residues 34-44 (SIPSTTSSLPS) are compositionally biased toward polar residues. The disordered stretch occupies residues 34–59 (SIPSTTSSLPSENAGRPIQNSALPSA). The region spanning 72–162 (TPTVELNALC…AAKALRTLQS (91 aa)) is the DRBM 1 domain. Position 108 is an asymmetric dimethylarginine (R108). R115 carries the post-translational modification Asymmetric dimethylarginine; alternate. R115 bears the Omega-N-methylarginine; alternate mark. The tract at residues 158-189 (RTLQSEPLPERPEGRRPGEQVNGRESEEENLN) is disordered. Over residues 165-182 (LPERPEGRRPGEQVNGRE) the composition is skewed to basic and acidic residues. Residue S183 is modified to Phosphoserine. One can recognise a DRBM 2 domain in the interval 191 to 258 (SEISQVFEIA…AIAVLEELKK (68 aa)). The residue at position 285 (S285) is a Phosphoserine. Positions 293–361 (NPISRLAQIQ…AENMLEILGF (69 aa)) constitute a DRBM 3 domain. The tract at residues 367–404 (QPTKPALKSEEKTPIKKPGDGRKVTFFEPGSGDENGTS) is disordered. Positions 373-391 (LKSEEKTPIKKPGDGRKVT) are enriched in basic and acidic residues. S397 bears the Phosphoserine mark.

As to quaternary structure, binds tubulin. Binds with low affinity single-stranded RNA or DNA homopolymers. Interacts with CASC3 in an RNA-dependent manner. Identified in a mRNP complex, at least composed of DHX9, DDX3X, ELAVL1, HNRNPU, IGF2BP1, ILF3, PABPC1, PCBP2, PTBP2, STAU1, STAU2, SYNCRIP and YBX1. Interacts with the influenza virus nonstructural protein NS1.

It is found in the cytoplasm. The protein resides in the rough endoplasmic reticulum. In terms of biological role, binds double-stranded RNA (regardless of the sequence) and tubulin. May play a role in specific positioning of mRNAs at given sites in the cell by cross-linking cytoskeletal and RNA components, and in stimulating their translation at the site. This is Double-stranded RNA-binding protein Staufen homolog 1 (STAU1) from Ailuropoda melanoleuca (Giant panda).